The chain runs to 194 residues: Protein GrpE (194 aa).

The span at 1–12 (MNKQKNNRERTP) shows a compositional bias: basic and acidic residues. The disordered stretch occupies residues 1 to 44 (MNKQKNNRERTPQPEQDTERDEQLTNSHENDIDSAPAAEENDKV).

The protein belongs to the GrpE family. Homodimer.

The protein localises to the cytoplasm. Its function is as follows. Participates actively in the response to hyperosmotic and heat shock by preventing the aggregation of stress-denatured proteins, in association with DnaK and GrpE. It is the nucleotide exchange factor for DnaK and may function as a thermosensor. Unfolded proteins bind initially to DnaJ; upon interaction with the DnaJ-bound protein, DnaK hydrolyzes its bound ATP, resulting in the formation of a stable complex. GrpE releases ADP from DnaK; ATP binding to DnaK triggers the release of the substrate protein, thus completing the reaction cycle. Several rounds of ATP-dependent interactions between DnaJ, DnaK and GrpE are required for fully efficient folding. This is Protein GrpE from Porphyromonas gingivalis (strain ATCC BAA-308 / W83).